The primary structure comprises 335 residues: Holliday junction branch migration complex subunit RuvB (335 aa).

The interval 4 to 184 (ADRLIDATEK…FGIVQRLEFY (181 aa)) is large ATPase domain (RuvB-L). Residues I23, R24, G65, K68, T69, T70, 131-133 (EDY), R174, Y184, and R221 each bind ATP. T69 is a Mg(2+) binding site. The interval 185–255 (SVEDLSYIVG…VAELALNMID (71 aa)) is small ATPAse domain (RuvB-S). A head domain (RuvB-H) region spans residues 258 to 335 (KSGFDYMDRK…HHFGLLPKQD (78 aa)). Residues R313 and R318 each coordinate DNA.

It belongs to the RuvB family. In terms of assembly, homohexamer. Forms an RuvA(8)-RuvB(12)-Holliday junction (HJ) complex. HJ DNA is sandwiched between 2 RuvA tetramers; dsDNA enters through RuvA and exits via RuvB. An RuvB hexamer assembles on each DNA strand where it exits the tetramer. Each RuvB hexamer is contacted by two RuvA subunits (via domain III) on 2 adjacent RuvB subunits; this complex drives branch migration. In the full resolvosome a probable DNA-RuvA(4)-RuvB(12)-RuvC(2) complex forms which resolves the HJ.

It is found in the cytoplasm. It carries out the reaction ATP + H2O = ADP + phosphate + H(+). In terms of biological role, the RuvA-RuvB-RuvC complex processes Holliday junction (HJ) DNA during genetic recombination and DNA repair, while the RuvA-RuvB complex plays an important role in the rescue of blocked DNA replication forks via replication fork reversal (RFR). RuvA specifically binds to HJ cruciform DNA, conferring on it an open structure. The RuvB hexamer acts as an ATP-dependent pump, pulling dsDNA into and through the RuvAB complex. RuvB forms 2 homohexamers on either side of HJ DNA bound by 1 or 2 RuvA tetramers; 4 subunits per hexamer contact DNA at a time. Coordinated motions by a converter formed by DNA-disengaged RuvB subunits stimulates ATP hydrolysis and nucleotide exchange. Immobilization of the converter enables RuvB to convert the ATP-contained energy into a lever motion, pulling 2 nucleotides of DNA out of the RuvA tetramer per ATP hydrolyzed, thus driving DNA branch migration. The RuvB motors rotate together with the DNA substrate, which together with the progressing nucleotide cycle form the mechanistic basis for DNA recombination by continuous HJ branch migration. Branch migration allows RuvC to scan DNA until it finds its consensus sequence, where it cleaves and resolves cruciform DNA. The polypeptide is Holliday junction branch migration complex subunit RuvB (Pseudoalteromonas translucida (strain TAC 125)).